The chain runs to 543 residues: Cytochrome P450 1B1 (543 aa).

C470 contacts heme.

It belongs to the cytochrome P450 family. Heme is required as a cofactor. Constitutively expressed in retinal and kidney pericytes cells. Expressed in retinal endothelial cells (at protein level). Expressed in cardiac, pulmonary and aortic endothelial cells. Constitutively expressed in trabecular meshwork of the eye (at protein level).

It localises to the endoplasmic reticulum membrane. The protein localises to the microsome membrane. The protein resides in the mitochondrion. The enzyme catalyses an organic molecule + reduced [NADPH--hemoprotein reductase] + O2 = an alcohol + oxidized [NADPH--hemoprotein reductase] + H2O + H(+). It carries out the reaction 17beta-estradiol + reduced [NADPH--hemoprotein reductase] + O2 = 2-hydroxy-17beta-estradiol + oxidized [NADPH--hemoprotein reductase] + H2O + H(+). The catalysed reaction is 17beta-estradiol + reduced [NADPH--hemoprotein reductase] + O2 = 4-hydroxy-17beta-estradiol + oxidized [NADPH--hemoprotein reductase] + H2O + H(+). It catalyses the reaction estrone + reduced [NADPH--hemoprotein reductase] + O2 = 2-hydroxyestrone + oxidized [NADPH--hemoprotein reductase] + H2O + H(+). The enzyme catalyses estrone + reduced [NADPH--hemoprotein reductase] + O2 = 4-hydroxyestrone + oxidized [NADPH--hemoprotein reductase] + H2O + H(+). It carries out the reaction testosterone + reduced [NADPH--hemoprotein reductase] + O2 = 6beta,17beta-dihydroxyandrost-4-en-3-one + oxidized [NADPH--hemoprotein reductase] + H2O + H(+). The catalysed reaction is progesterone + reduced [NADPH--hemoprotein reductase] + O2 = 6beta-hydroxyprogesterone + oxidized [NADPH--hemoprotein reductase] + H2O + H(+). It catalyses the reaction progesterone + reduced [NADPH--hemoprotein reductase] + O2 = 16alpha-hydroxyprogesterone + oxidized [NADPH--hemoprotein reductase] + H2O + H(+). The enzyme catalyses all-trans-retinol + reduced [NADPH--hemoprotein reductase] + O2 = all-trans-retinal + oxidized [NADPH--hemoprotein reductase] + 2 H2O + H(+). It carries out the reaction all-trans-retinal + reduced [NADPH--hemoprotein reductase] + O2 = all-trans-retinoate + oxidized [NADPH--hemoprotein reductase] + H2O + 2 H(+). The catalysed reaction is (5Z,8Z,11Z,14Z)-eicosatetraenoate + reduced [NADPH--hemoprotein reductase] + O2 = (8R,9S)-epoxy-(5Z,11Z,14Z)-eicosatrienoate + oxidized [NADPH--hemoprotein reductase] + H2O + H(+). It catalyses the reaction (5Z,8Z,11Z,14Z)-eicosatetraenoate + reduced [NADPH--hemoprotein reductase] + O2 = (11R,12S)-epoxy-(5Z,8Z,14Z)-eicosatrienoate + oxidized [NADPH--hemoprotein reductase] + H2O + H(+). The enzyme catalyses (5Z,8Z,11Z,14Z)-eicosatetraenoate + reduced [NADPH--hemoprotein reductase] + O2 = (11S,12R)-epoxy-(5Z,8Z,14Z)-eicosatrienoate + oxidized [NADPH--hemoprotein reductase] + H2O + H(+). It carries out the reaction (5Z,8Z,11Z,14Z)-eicosatetraenoate + reduced [NADPH--hemoprotein reductase] + O2 = (14R,15S)-epoxy-(5Z,8Z,11Z)-eicosatrienoate + oxidized [NADPH--hemoprotein reductase] + H2O + H(+). The catalysed reaction is (5S)-hydroperoxy-(6E,8Z,11Z,14Z)-eicosatetraenoate = 5-oxo-(6E,8Z,11Z,14Z)-eicosatetraenoate + H2O. It catalyses the reaction (12S)-hydroperoxy-(5Z,8Z,10E,14Z)-eicosatetraenoate = 12-oxo-(5Z,8Z,10E,14Z)-eicosatetraenoate + H2O. The enzyme catalyses (13S)-hydroperoxy-(9Z,11E)-octadecadienoate = 13-oxo-(9Z,11E)-octadecadienoate + H2O. It carries out the reaction (15S)-hydroperoxy-(5Z,8Z,11Z,13E)-eicosatetraenoate = 15-oxo-(5Z,8Z,11Z,13E)-eicosatetraenoate + H2O. It participates in steroid hormone biosynthesis. It functions in the pathway cofactor metabolism; retinol metabolism. Its pathway is lipid metabolism; arachidonate metabolism. Enzyme activity is increased by cytochrome b5. Enzyme activity is increased by liposomes containing anionic phospholipids, phosphatidic acid and cardiolipin. Inhibited by naringenin with an IC(50) of 5 uM. Functionally, a cytochrome P450 monooxygenase involved in the metabolism of various endogenous substrates, including fatty acids, steroid hormones and vitamins. Mechanistically, uses molecular oxygen inserting one oxygen atom into a substrate, and reducing the second into a water molecule, with two electrons provided by NADPH via cytochrome P450 reductase (NADPH--hemoprotein reductase). Exhibits catalytic activity for the formation of hydroxyestrogens from 17beta-estradiol (E2), namely 2- and 4-hydroxy E2. Metabolizes testosterone and progesterone to B or D ring hydroxylated metabolites. May act as a major enzyme for all-trans retinoic acid biosynthesis in extrahepatic tissues. Catalyzes two successive oxidative transformation of all-trans retinol to all-trans retinal and then to the active form all-trans retinoic acid. Catalyzes the epoxidation of double bonds of certain PUFA. Converts arachidonic acid toward epoxyeicosatrienoic acid (EpETrE) regioisomers, 8,9-, 11,12-, and 14,15- EpETrE, that function as lipid mediators in the vascular system. Additionally, displays dehydratase activity toward oxygenated eicosanoids hydroperoxyeicosatetraenoates (HpETEs). This activity is independent of cytochrome P450 reductase, NADPH, and O2. Also involved in the oxidative metabolism of xenobiotics, particularly converting polycyclic aromatic hydrocarbons and heterocyclic aryl amines procarcinogens to DNA-damaging products. Plays an important role in retinal vascular development. Under ambient/hyperoxic O2 conditions, promotes angiogenesis and capillary morphogenesis of retinal endothelial cells and pericytes, likely by metabolizing the oxygenated products symptomatic of oxidative stress. Also, contributes to oxidative homeostasis and ultrastructural organization and function of trabecular meshwork tissue through modulation of POSTN expression. The chain is Cytochrome P450 1B1 from Mus musculus (Mouse).